A 151-amino-acid chain; its full sequence is Nucleoside diphosphate kinase (151 aa).

Residues K9, F57, R86, T92, R103, and N113 each contribute to the ATP site. The active-site Pros-phosphohistidine intermediate is the H116.

The protein belongs to the NDK family. Homotetramer. Mg(2+) is required as a cofactor.

Its subcellular location is the cytoplasm. The catalysed reaction is a 2'-deoxyribonucleoside 5'-diphosphate + ATP = a 2'-deoxyribonucleoside 5'-triphosphate + ADP. It carries out the reaction a ribonucleoside 5'-diphosphate + ATP = a ribonucleoside 5'-triphosphate + ADP. In terms of biological role, major role in the synthesis of nucleoside triphosphates other than ATP. The ATP gamma phosphate is transferred to the NDP beta phosphate via a ping-pong mechanism, using a phosphorylated active-site intermediate. This is Nucleoside diphosphate kinase from Chloroflexus aurantiacus (strain ATCC 29364 / DSM 637 / Y-400-fl).